An 841-amino-acid polypeptide reads, in one-letter code: Protein translocase subunit SecA (841 aa).

ATP contacts are provided by residues Gln-86, 104-108 (GEGKT), and Asp-493. Residues 788–822 (EEVAEGKAVRPSANGQEDKKAKRKPVRKAENIGRN) form a disordered region. The Zn(2+) site is built by Cys-825, Cys-827, Cys-836, and Cys-837.

The protein belongs to the SecA family. Monomer and homodimer. Part of the essential Sec protein translocation apparatus which comprises SecA, SecYEG and auxiliary proteins SecDF. Other proteins may also be involved. Zn(2+) is required as a cofactor.

The protein localises to the cell membrane. Its subcellular location is the cytoplasm. It catalyses the reaction ATP + H2O + cellular proteinSide 1 = ADP + phosphate + cellular proteinSide 2.. Its function is as follows. Part of the Sec protein translocase complex. Interacts with the SecYEG preprotein conducting channel. Has a central role in coupling the hydrolysis of ATP to the transfer of proteins into and across the cell membrane, serving as an ATP-driven molecular motor driving the stepwise translocation of polypeptide chains across the membrane. In Shouchella clausii (strain KSM-K16) (Alkalihalobacillus clausii), this protein is Protein translocase subunit SecA.